The primary structure comprises 626 residues: Polygalacturonase 1 beta-like protein 3 (626 aa).

Positions 1–23 (MLKQFLLLQSFSFFLFNVVIVGG) are cleaved as a signal peptide. Residues 117 to 120 (FSVY) form an FXXY 1 repeat. N-linked (GlcNAc...) asparagine glycosylation occurs at N124. FXXY repeat units follow at residues 125–128 (FTNY), 139–142 (FKNY), 153–156 (FRRY), 167–170 (FTVY), 181–184 (FNSY), 195–198 (FTNY), 209–212 (FTAY), 223–226 (FKTY), 238–241 (FTSY), 252–255 (FTSY), and 266–269 (FSNY). The N-linked (GlcNAc...) asparagine glycan is linked to N141. An N-linked (GlcNAc...) asparagine glycan is attached at N277. FXXY repeat units follow at residues 280–283 (FTSY), 294–297 (FNNY), 308–311 (FANY), 322–325 (FSSY), 336–339 (FVNY), 350–353 (FTGY), and 364–367 (FKTY). An N-linked (GlcNAc...) asparagine glycan is attached at N370. FXXY repeat units follow at residues 373–376 (FKDY) and 383–386 (FAKY). N-linked (GlcNAc...) asparagine glycans are attached at residues N387 and N465. The BURP domain maps to 411-625 (FFRESSLKEG…FENDMNWAIA (215 aa)).

Expressed in flowers and stems. Detected in trichomes, guard cells, root vascular tissue, root hairs, pollen sacs, sepals and styles of pistils.

Its subcellular location is the secreted. The protein localises to the extracellular space. It is found in the apoplast. It localises to the cell wall. Its function is as follows. Involved in cell size determination. May serve as a chaperone for expansins through the secretory pathway. This chain is Polygalacturonase 1 beta-like protein 3, found in Arabidopsis thaliana (Mouse-ear cress).